The chain runs to 310 residues: tRNA pseudouridine synthase B (310 aa).

The active-site Nucleophile is the aspartate 47.

This sequence belongs to the pseudouridine synthase TruB family. Type 1 subfamily.

It carries out the reaction uridine(55) in tRNA = pseudouridine(55) in tRNA. Functionally, responsible for synthesis of pseudouridine from uracil-55 in the psi GC loop of transfer RNAs. In Caulobacter vibrioides (strain ATCC 19089 / CIP 103742 / CB 15) (Caulobacter crescentus), this protein is tRNA pseudouridine synthase B.